The following is a 250-amino-acid chain: Pyridoxine 5'-phosphate synthase (250 aa).

Asn-11 contacts 3-amino-2-oxopropyl phosphate. Residue Asp-13–His-14 coordinates 1-deoxy-D-xylulose 5-phosphate. 3-amino-2-oxopropyl phosphate is bound at residue Arg-22. The active-site Proton acceptor is the His-47. Residues Arg-49 and His-54 each contribute to the 1-deoxy-D-xylulose 5-phosphate site. The Proton acceptor role is filled by Glu-74. Thr-104 provides a ligand contact to 1-deoxy-D-xylulose 5-phosphate. The active-site Proton donor is the His-198. 3-amino-2-oxopropyl phosphate is bound by residues Gly-199 and Gly-220–Tyr-221.

The protein belongs to the PNP synthase family. Homooctamer; tetramer of dimers.

The protein localises to the cytoplasm. The enzyme catalyses 3-amino-2-oxopropyl phosphate + 1-deoxy-D-xylulose 5-phosphate = pyridoxine 5'-phosphate + phosphate + 2 H2O + H(+). It functions in the pathway cofactor biosynthesis; pyridoxine 5'-phosphate biosynthesis; pyridoxine 5'-phosphate from D-erythrose 4-phosphate: step 5/5. Catalyzes the complicated ring closure reaction between the two acyclic compounds 1-deoxy-D-xylulose-5-phosphate (DXP) and 3-amino-2-oxopropyl phosphate (1-amino-acetone-3-phosphate or AAP) to form pyridoxine 5'-phosphate (PNP) and inorganic phosphate. In Bradyrhizobium diazoefficiens (strain JCM 10833 / BCRC 13528 / IAM 13628 / NBRC 14792 / USDA 110), this protein is Pyridoxine 5'-phosphate synthase.